The chain runs to 609 residues: NADH-ubiquinone oxidoreductase chain 5 (609 aa).

Helical transmembrane passes span 3–23 (VINL…LPIV), 41–61 (TAIS…IYSG), 90–110 (MIFV…SMWY), 115–135 (PFIN…MILV), 140–160 (LFQL…LIGW), 174–194 (AVLY…WFLI), 214–236 (VPLM…HPWL), 244–264 (TPVS…FLLI), 276–296 (MQTT…ICAL), 304–323 (IIAF…IGIN), 328–350 (AFLH…GSII), 368–388 (VLPF…GMPF), 410–432 (WALL…IMFF), 460–480 (LLLG…PTST), 491–511 (LMAL…NLTS), and 585–605 (GLIK…LMMI).

It belongs to the complex I subunit 5 family. In terms of assembly, core subunit of respiratory chain NADH dehydrogenase (Complex I) which is composed of 45 different subunits.

It localises to the mitochondrion inner membrane. The catalysed reaction is a ubiquinone + NADH + 5 H(+)(in) = a ubiquinol + NAD(+) + 4 H(+)(out). Core subunit of the mitochondrial membrane respiratory chain NADH dehydrogenase (Complex I) which catalyzes electron transfer from NADH through the respiratory chain, using ubiquinone as an electron acceptor. Essential for the catalytic activity and assembly of complex I. In Halichoerus grypus (Gray seal), this protein is NADH-ubiquinone oxidoreductase chain 5 (MT-ND5).